We begin with the raw amino-acid sequence, 163 residues long: Probable phosphotransferase enzyme IIB component M6_Spy0801 (163 aa).

Residues 1-163 (MITQIRVDDR…TKVHLSQLVN (163 aa)) enclose the PTS EIIB type-4 domain. Residue H13 is the Pros-phosphohistidine intermediate of the active site.

It is found in the cytoplasm. Its function is as follows. The phosphoenolpyruvate-dependent sugar phosphotransferase system (sugar PTS), a major carbohydrate active -transport system, catalyzes the phosphorylation of incoming sugar substrates concomitantly with their translocation across the cell membrane. The polypeptide is Probable phosphotransferase enzyme IIB component M6_Spy0801 (Streptococcus pyogenes serotype M6 (strain ATCC BAA-946 / MGAS10394)).